Reading from the N-terminus, the 292-residue chain is Protease HtpX (292 aa).

A run of 2 helical transmembrane segments spans residues 5–25 (IFLFLLTNVAVLMLAGVVMSV) and 34–54 (SGLLVMAAIFGFGGSFISLLL). Residue His140 participates in Zn(2+) binding. The active site involves Glu141. His144 lines the Zn(2+) pocket. 2 helical membrane passes run 155-175 (LLQGVLNTFVIVLARVVGGII) and 193-213 (IIVFVLEMVFGMFATMIAMWF). Glu218 serves as a coordination point for Zn(2+).

Belongs to the peptidase M48B family. Zn(2+) is required as a cofactor.

It is found in the cell inner membrane. This is Protease HtpX from Xanthomonas oryzae pv. oryzae (strain MAFF 311018).